The sequence spans 686 residues: MATDPRKILVTCALPYANGSIHLGHMLEHIQADIWVRYQRLRGNDINFICADDAHGTPIMLKAQQMGITPEEMIAAVSEEHQKDFAGFDISFDNYHSTHSDENRELASSIYLELKKNGFITSRTISQLFDPEKEMFLPDRFVKGTCPKCKSEEQYGDNCDNCGETYSPTDLINPKSAVSGATPVMKDSEHFFFDLPQFESMLKEWTRSGSLQTETANKMQEWFESGLQQWDISRDAPYFGFEIPGETNKFFYVWLDAPIGYMGSFKNLCDKRDDLDFDEYWKLNSTTELYHFIGKDIVYFHSLFWPAMLDGAGFRKPNNVFVHGYVTVNGAKMSKSKGTFIKAGTYLNHLDPECLRYYYAAKLNSRIDDIDLNLEDFTQRVNSDVVNKIVNLASRNAGFITKRFDGKLSDNFVAPELYNEFVAASDRIAELYETREFSRAIREITALADKANQYIDEKAPWVLAKEEGKEQELQEVASVGINLFRVLMAYLKPVMPELAARTEAFLNETLTWECIAQPLTSHEITKFKALFNRIDPKKVEAMVEESKEDAAIEMAAKEKAEAEKEKANQTELDKEPIADEIEFDAFEAVDMRIARIISCEEIPKANKLLKFQLDIGGETRQVFSGIKSAYTPEELVGKHTVMVANLKPRKMKFGMSEGMILAAGPGGKDLWILEPHEGAQPGMRVM.

Positions Pro-15 to His-25 match the 'HIGH' region motif. 4 residues coordinate Zn(2+): Cys-146, Cys-149, Cys-159, and Cys-162. A 'KMSKS' region motif is present at residues Lys-332 to Ser-336. Lys-335 is an ATP binding site. Residues Ala-585 to Met-686 form the tRNA-binding domain.

This sequence belongs to the class-I aminoacyl-tRNA synthetase family. MetG type 1 subfamily. As to quaternary structure, homodimer. Zn(2+) is required as a cofactor.

The protein localises to the cytoplasm. The enzyme catalyses tRNA(Met) + L-methionine + ATP = L-methionyl-tRNA(Met) + AMP + diphosphate. Its function is as follows. Is required not only for elongation of protein synthesis but also for the initiation of all mRNA translation through initiator tRNA(fMet) aminoacylation. The polypeptide is Methionine--tRNA ligase (Aliivibrio salmonicida (strain LFI1238) (Vibrio salmonicida (strain LFI1238))).